A 462-amino-acid polypeptide reads, in one-letter code: Siroheme synthase (462 aa).

The precorrin-2 dehydrogenase /sirohydrochlorin ferrochelatase stretch occupies residues 1–201 (MQFLPLFHKL…GKPEEGERLL (201 aa)). Residues 22 to 23 (EV) and 43 to 44 (PE) each bind NAD(+). Position 126 is a phosphoserine (Ser126). The tract at residues 214-462 (GEVYLVGAGP…AWFEGAQGSL (249 aa)) is uroporphyrinogen-III C-methyltransferase. An S-adenosyl-L-methionine-binding site is contributed by Pro223. Asp246 functions as the Proton acceptor in the catalytic mechanism. The Proton donor role is filled by Lys268. S-adenosyl-L-methionine-binding positions include 299 to 301 (GGD), Ile304, 329 to 330 (TA), Met381, and Gly410.

In the N-terminal section; belongs to the precorrin-2 dehydrogenase / sirohydrochlorin ferrochelatase family. It in the C-terminal section; belongs to the precorrin methyltransferase family.

It catalyses the reaction uroporphyrinogen III + 2 S-adenosyl-L-methionine = precorrin-2 + 2 S-adenosyl-L-homocysteine + H(+). The catalysed reaction is precorrin-2 + NAD(+) = sirohydrochlorin + NADH + 2 H(+). The enzyme catalyses siroheme + 2 H(+) = sirohydrochlorin + Fe(2+). Its pathway is cofactor biosynthesis; adenosylcobalamin biosynthesis; precorrin-2 from uroporphyrinogen III: step 1/1. It functions in the pathway cofactor biosynthesis; adenosylcobalamin biosynthesis; sirohydrochlorin from precorrin-2: step 1/1. The protein operates within porphyrin-containing compound metabolism; siroheme biosynthesis; precorrin-2 from uroporphyrinogen III: step 1/1. It participates in porphyrin-containing compound metabolism; siroheme biosynthesis; siroheme from sirohydrochlorin: step 1/1. Its pathway is porphyrin-containing compound metabolism; siroheme biosynthesis; sirohydrochlorin from precorrin-2: step 1/1. Functionally, multifunctional enzyme that catalyzes the SAM-dependent methylations of uroporphyrinogen III at position C-2 and C-7 to form precorrin-2 via precorrin-1. Then it catalyzes the NAD-dependent ring dehydrogenation of precorrin-2 to yield sirohydrochlorin. Finally, it catalyzes the ferrochelation of sirohydrochlorin to yield siroheme. This chain is Siroheme synthase, found in Ectopseudomonas mendocina (strain ymp) (Pseudomonas mendocina).